Reading from the N-terminus, the 527-residue chain is MTDTAAQRHHRLQAHADLLTQTLRGIEKEGLRVDHQGVLARTAHPAGLGAALTNAHVTTDYSEALLELITGTHTEVDSLLGELRDTHRYVYGVLEGEYIWNQSMPATLPPEADIPIAWYGTSNTGMLKHVYRRGLAERYGKTMQCIAGVHYNFSLPDALWDVLVPDAPTPQARRSRGYISLIRNFTRYSWLLMYLFGSAPALAREFMRGRDHLLETLDPSTLYLPYATSLRMSDLGYQNKAQSRLKLCYNDLDTFLGRLYEAVTEPWPAYQAIGTRRDGQWIQLNTNVLQIENEYYSSIRPKRATGRCERPITALAERGVQYVEVRCLDIDPLTPEGISAETARFVDAFLLFCATSDSPFFPDNGYCQRSADNFAVVVKEGRKPGLMLDREGQAVSVPQWGHELLDQIAPYAALYDQALGGDAYAAALAAQRAKLDQPDLTPSARVLAALREGNVSFHDYSLDLSRRHADALRAQPLPAERTQAYAEAARQSVAEQLRLEQSDAVDFDTYVAHYHAALKNPLPSTAS.

Belongs to the glutamate--cysteine ligase type 1 family. Type 1 subfamily.

The catalysed reaction is L-cysteine + L-glutamate + ATP = gamma-L-glutamyl-L-cysteine + ADP + phosphate + H(+). Its pathway is sulfur metabolism; glutathione biosynthesis; glutathione from L-cysteine and L-glutamate: step 1/2. The chain is Glutamate--cysteine ligase from Bordetella parapertussis (strain 12822 / ATCC BAA-587 / NCTC 13253).